The chain runs to 316 residues: Very-long-chain 3-oxooacyl-coA reductase let-767 (316 aa).

NADP(+) contacts are provided by residues 47–76 (ASWAVVTGATDGIGKAYAFELARRGFNVLL) and Asp106. Residue Ser189 participates in substrate binding. Tyr202 acts as the Proton acceptor in catalysis. Lys206 contacts NADP(+).

It belongs to the short-chain dehydrogenases/reductases (SDR) family. 17-beta-HSD 3 subfamily. As to expression, expressed in the gut of larva and adult.

The enzyme catalyses a very-long-chain (3R)-3-hydroxyacyl-CoA + NADP(+) = a very-long-chain 3-oxoacyl-CoA + NADPH + H(+). The catalysed reaction is (omega-1)-methyl-(3R)-hydroxy-fatty acyl-CoA + NADP(+) = (omega-1)-methyl-3-oxo-fatty acyl-CoA + NADPH + H(+). It catalyses the reaction a 17beta-hydroxy steroid + NADP(+) = a 17-oxo steroid + NADPH + H(+). It participates in lipid metabolism; fatty acid biosynthesis. Its function is as follows. Required for branched-chain fatty acid synthesis (such as (omega-1)-methyl-fatty acids). Catalyzes the reduction of the 3-keto-fatty acyl-CoA intermediate that is formed in each cycle of fatty acid elongation. Very long-chain fatty acids (VLCFAs) serve as precursors for ceramide and sphingolipids. Involved in hormone production as it metabolizes 4-androstendione (androst-4-ene-3,17-dione) into testosterone and estrone into estradiol (17beta-estradiol) in vitro, but the physiological steroid substrate is unknown. This Caenorhabditis elegans protein is Very-long-chain 3-oxooacyl-coA reductase let-767 (let-767).